Consider the following 214-residue polypeptide: Adenylate kinase (214 aa).

Position 10-15 (10-15 (GAGKGT)) interacts with ATP. Positions 30-59 (STGDMLRAAIKAGTELGKQAKAVIDAGQLV) are NMP. AMP is bound by residues Thr-31, Arg-36, 57-59 (QLV), 85-88 (GFPR), and Gln-92. Residues 122-159 (GRRAHLPSGRTYHVVYNPPKVEGKDDVTGEDLVVRDDD) are LID. ATP-binding positions include Arg-123 and 132 to 133 (TY). AMP-binding residues include Arg-156 and Arg-167. Residue Lys-200 participates in ATP binding.

The protein belongs to the adenylate kinase family. Monomer.

Its subcellular location is the cytoplasm. It carries out the reaction AMP + ATP = 2 ADP. It functions in the pathway purine metabolism; AMP biosynthesis via salvage pathway; AMP from ADP: step 1/1. Functionally, catalyzes the reversible transfer of the terminal phosphate group between ATP and AMP. Plays an important role in cellular energy homeostasis and in adenine nucleotide metabolism. This chain is Adenylate kinase, found in Vibrio campbellii (strain ATCC BAA-1116).